The following is a 526-amino-acid chain: MSQNNIHEHRILILDFGSQYTQLIARRIREIGVYCEVEPWDIDVEDIVKFGARGIILSGGPETVTGDNAPVAPVEVFELGVPVLGICYGMQTMAEQLGGKVINATEHEYGYAQVRAHGHTKLLNDIEDHVTPEGYGMLDVWMSHGDRVDKMPEGFKLMASTGNCPIAGMANEEKDFYGIQFHPEVTHTTQGQRMIERFVVDLCGCEKLWTTENIIDDSIARIRQQVGSDEVLLGLSGGVDSSVVAALLHKAIGDQLTCVFVDHGLLRHQEGDQVMSMFAENMGIKVIRVDAEDYFMNALAGEADPEKKRKIIGHAFIEMFDQESAKLTGVKWLAQGTIYPDVIESAGSKTGKAKVIKSHHNVGGLPEDMKLELLEPLRELFKDEVRRLGVALGLPSDMVYRHPFPGPGLGVRILGEVKKEYADILRLADHIFIEELRAADLYDKTSQAFTVFLPVKSVGVVGDARRYDYVVSLRAVETIDFMTARWAHLPYDFLEKVSNRIINEIPRITRVTYDISSKPPATIEWE.

Residues 10-208 form the Glutamine amidotransferase type-1 domain; it reads RILILDFGSQ…VVDLCGCEKL (199 aa). Cys87 acts as the Nucleophile in catalysis. Active-site residues include His182 and Glu184. The GMPS ATP-PPase domain occupies 209 to 401; it reads WTTENIIDDS…LGLPSDMVYR (193 aa). 236–242 contacts ATP; it reads SGGVDSS.

In terms of assembly, homodimer.

It carries out the reaction XMP + L-glutamine + ATP + H2O = GMP + L-glutamate + AMP + diphosphate + 2 H(+). The protein operates within purine metabolism; GMP biosynthesis; GMP from XMP (L-Gln route): step 1/1. Functionally, catalyzes the synthesis of GMP from XMP. This Hydrogenovibrio crunogenus (strain DSM 25203 / XCL-2) (Thiomicrospira crunogena) protein is GMP synthase [glutamine-hydrolyzing].